The chain runs to 416 residues: L-threonine dehydratase biosynthetic IlvA (416 aa).

Lys51 bears the N6-(pyridoxal phosphate)lysine mark. Pyridoxal 5'-phosphate is bound by residues Asn78, 184 to 188 (GGGGL), and Ser309. Residues 333 to 407 (HYFVINFPQR…FDNRYVNLHG (75 aa)) enclose the ACT-like domain.

Belongs to the serine/threonine dehydratase family. In terms of assembly, homotetramer. Requires pyridoxal 5'-phosphate as cofactor.

It carries out the reaction L-threonine = 2-oxobutanoate + NH4(+). The protein operates within amino-acid biosynthesis; L-isoleucine biosynthesis; 2-oxobutanoate from L-threonine: step 1/1. Its function is as follows. Catalyzes the anaerobic formation of alpha-ketobutyrate and ammonia from threonine in a two-step reaction. The first step involved a dehydration of threonine and a production of enamine intermediates (aminocrotonate), which tautomerizes to its imine form (iminobutyrate). Both intermediates are unstable and short-lived. The second step is the nonenzymatic hydrolysis of the enamine/imine intermediates to form 2-ketobutyrate and free ammonia. In the low water environment of the cell, the second step is accelerated by RidA. In Lactococcus lactis subsp. lactis (strain IL1403) (Streptococcus lactis), this protein is L-threonine dehydratase biosynthetic IlvA (ilvA).